The primary structure comprises 916 residues: Isoleucine--tRNA ligase (916 aa).

The 'HIGH' region signature appears at 57–67 (PYANGNLHMGH). Glu-554 contacts L-isoleucyl-5'-AMP. Residues 595-599 (KMSKS) carry the 'KMSKS' region motif. An ATP-binding site is contributed by Lys-598. Zn(2+) contacts are provided by Cys-885, Cys-888, Cys-905, and Cys-908.

Belongs to the class-I aminoacyl-tRNA synthetase family. IleS type 1 subfamily. Monomer. The cofactor is Zn(2+).

It localises to the cytoplasm. The enzyme catalyses tRNA(Ile) + L-isoleucine + ATP = L-isoleucyl-tRNA(Ile) + AMP + diphosphate. Catalyzes the attachment of isoleucine to tRNA(Ile). As IleRS can inadvertently accommodate and process structurally similar amino acids such as valine, to avoid such errors it has two additional distinct tRNA(Ile)-dependent editing activities. One activity is designated as 'pretransfer' editing and involves the hydrolysis of activated Val-AMP. The other activity is designated 'posttransfer' editing and involves deacylation of mischarged Val-tRNA(Ile). The polypeptide is Isoleucine--tRNA ligase (Staphylococcus saprophyticus subsp. saprophyticus (strain ATCC 15305 / DSM 20229 / NCIMB 8711 / NCTC 7292 / S-41)).